The sequence spans 967 residues: MQPEVPLGSGKLKPCSDMGDIQRAAKFRSSQSAHMLLLLLASITMLLCVRGAHGRPTEEDEELVLPSLERARGHDSTTLLRLDAFGQQLHLKLQPDSGFLAPGFTLQTVGRSPGSEAQHLDPTGDLAHCFYSGTVNGDPSSAAALSLCEGVRGAFYLQGEEFFIQPAPAVATERLVPAEPKEESIAPPRFHILRRRRRGSGGAKCGVMDEETLPTSNSGRESQNTPDQWPLRNPTPQGAGKPTGPGSIRKKRFVSSPRYVETMLVADQSMADFHGSGLKHYLLTLFSVAARFYKHPSIRNSISLVVVKILVIYEEQKGPEVTSNAALTLRNFCSWQKQHNSPSDRDPEHYDTAILFTRQDLCGSHTCDTLGMADVGTVCDPSRSCSVIEDDGLQAAFTTAHELGHVFNMPHDDAKHCASFNGVSGDSHLMASMLSSLDHSQPWSPCSAYMVTSFLDNGHGECLMDKPQNPIKLPSDLPGTLYDANRQCQFTFGEESTHCPDAASTCSTLWCTGTSGGLLVCQTKHFPWADGTSCGEGKWCVSGKCVNKTDMKHFATPVHGSWGPWGPWGDCSRTCGGGVQYTMRECDNPVPKNGGKYCEGKRVRYRSCNIEDCPDNNGKTFREEQCEAHNEFSKASFGNEPTVEWTPKYAGVSPKDRCKLTCEAKGIGYFFVLQPKVVDGTPCSPDSTSVCVQGQCVKAGCDRIIDSKKKFDKCGVCGGNGSTCKKISGTVTSTRPGYHDIVTIPAGATNIEVKHRNPRGSRNNGSFLAIRAADGTYILNGNFTLSTLEQDLTYKGTVLRYSGSSAALERIRSFSPLKEPLTIQVLMVGHALRPKIKYTYFMKKKTEPFNAIPTFSEWVIEEWGECSKTCGSGWQRRVVECRDINGHPASECAKEVKPASTRPCADLPCPRWQVGDWSPCSKTCGKGYKKRTLKCLSHDGGVLSNESCDPLKKPKHYIDFCILTQCS.

A signal peptide spans 1 to 54 (MQPEVPLGSGKLKPCSDMGDIQRAAKFRSSQSAHMLLLLLASITMLLCVRGAHG). The propeptide occupies 55–252 (RPTEEDEELV…TGPGSIRKKR (198 aa)). The tract at residues 198–252 (RGSGGAKCGVMDEETLPTSNSGRESQNTPDQWPLRNPTPQGAGKPTGPGSIRKKR) is disordered. A Cysteine switch motif is present at residues 203–210 (AKCGVMDE). Position 205 (cysteine 205) interacts with Zn(2+). The span at 213 to 227 (LPTSNSGRESQNTPD) shows a compositional bias: polar residues. The Peptidase M12B domain maps to 258–467 (RYVETMLVAD…GHGECLMDKP (210 aa)). 3 residues coordinate Ca(2+): glutamate 261, aspartate 344, and aspartate 351. Disulfide bonds link cysteine 333/cysteine 385, cysteine 362/cysteine 367, cysteine 379/cysteine 462, and cysteine 417/cysteine 446. Zn(2+) is bound at residue histidine 401. Glutamate 402 is an active-site residue. Histidine 405 and histidine 411 together coordinate Zn(2+). Positions 462 and 465 each coordinate Ca(2+). The 83-residue stretch at 476–558 (DLPGTLYDAN…TDMKHFATPV (83 aa)) folds into the Disintegrin domain. Cystine bridges form between cysteine 488–cysteine 511, cysteine 499–cysteine 521, cysteine 506–cysteine 540, and cysteine 534–cysteine 545. N-linked (GlcNAc...) asparagine glycosylation occurs at asparagine 547. A TSP type-1 1 domain is found at 559-614 (HGSWGPWGPWGDCSRTCGGGVQYTMRECDNPVPKNGGKYCEGKRVRYRSCNIEDCP). Intrachain disulfides connect cysteine 571-cysteine 608, cysteine 575-cysteine 613, and cysteine 586-cysteine 598. Residues asparagine 720, asparagine 764, and asparagine 782 are each glycosylated (N-linked (GlcNAc...) asparagine). The tract at residues 725–857 (KKISGTVTST…PFNAIPTFSE (133 aa)) is spacer. 2 TSP type-1 domains span residues 854–910 (TFSE…LPCP) and 911–967 (RWQV…TQCS). Residue asparagine 945 is glycosylated (N-linked (GlcNAc...) asparagine).

The cofactor is Zn(2+). Post-translationally, the precursor is cleaved by a furin endopeptidase. Glycosylated. Can be O-fucosylated by POFUT2 on a serine or a threonine residue found within the consensus sequence C1-X(2)-(S/T)-C2-G of the TSP type-1 repeat domains where C1 and C2 are the first and second cysteine residue of the repeat, respectively. Fucosylated repeats can then be further glycosylated by the addition of a beta-1,3-glucose residue by the glucosyltransferase, B3GALTL. Fucosylation mediates the efficient secretion of ADAMTS family members. Can also be C-glycosylated with one or two mannose molecules on tryptophan residues within the consensus sequence W-X-X-W of the TPRs, and N-glycosylated. These other glycosylations can also facilitate secretion.

It is found in the secreted. Its subcellular location is the extracellular space. The protein resides in the extracellular matrix. Metalloprotease which cleaves aggrecan, a cartilage proteoglycan, at the '1683-Glu-|-Leu-1684' site (within the chondroitin sulfate attachment domain), and may be involved in its turnover. Also cleaves COMP. Has angiogenic inhibitor activity. May play a critical role in follicular rupture. In Rattus norvegicus (Rat), this protein is A disintegrin and metalloproteinase with thrombospondin motifs 1 (Adamts1).